A 481-amino-acid polypeptide reads, in one-letter code: Proline--tRNA ligase (481 aa).

It belongs to the class-II aminoacyl-tRNA synthetase family. ProS type 3 subfamily. In terms of assembly, homodimer.

It is found in the cytoplasm. It catalyses the reaction tRNA(Pro) + L-proline + ATP = L-prolyl-tRNA(Pro) + AMP + diphosphate. In terms of biological role, catalyzes the attachment of proline to tRNA(Pro) in a two-step reaction: proline is first activated by ATP to form Pro-AMP and then transferred to the acceptor end of tRNA(Pro). This is Proline--tRNA ligase from Chlorobium phaeovibrioides (strain DSM 265 / 1930) (Prosthecochloris vibrioformis (strain DSM 265)).